The sequence spans 99 residues: U11-barytoxin-Tl1a (99 aa).

Positions 1–21 (MKTLVLVAVLGLASLYLLSYA) are cleaved as a signal peptide. The propeptide occupies 22–50 (SEVQQISRDEEDFRALMASFGGIFDTEER). Cystine bridges form between C57/C71, C64/C76, and C70/C90.

Belongs to the neurotoxin 10 (Hwtx-1) family. 25 (ICK4) subfamily. As to expression, expressed by the venom gland.

The protein localises to the secreted. Functionally, ion channel inhibitor. The chain is U11-barytoxin-Tl1a from Trittame loki (Brush-footed trapdoor spider).